A 1465-amino-acid polypeptide reads, in one-letter code: Gag-Pol polyprotein (1465 aa).

A lipid anchor (N-myristoyl glycine; by host) is attached at G2. Residues 16 to 22 (FEHIRLR) carry the Nuclear export signal motif. Positions 26 to 32 (KKKYQIK) match the Nuclear localization signal motif. Positions 116–144 (NAERNTTETSSGQKKNDKGVTVPPGGSQN) are disordered. 2 CCHC-type zinc fingers span residues 402–419 (VKCY…QCPE) and 423–440 (MRCL…DCRG). The Peptidase A2 domain occupies 532–603 (IRALLDTGAD…TPINIIGRNI (72 aa)). Residue D537 is the For protease activity; shared with dimeric partner of the active site. Residues 659–849 (EGKISKIGGE…PPYEWMGYKL (191 aa)) enclose the Reverse transcriptase domain. D725, D800, and D801 together coordinate Mg(2+). Positions 842–850 (YEWMGYKLW) are RT 'primer grip'. The Tryptophan repeat motif signature appears at 1012–1028 (WEQWWADYWQVSWIPDW). An RNase H type-1 domain is found at 1048–1171 (IPKEDVYYVD…IDKLVSQGMR (124 aa)). Residues D1057, E1092, D1112, and D1163 each coordinate Mg(2+). An Integrase-type zinc finger spans residues 1177 to 1218 (EKIEEAQEEHERYHNNWRNLADTYGLPQIVAKEIVAMCPKCQ). Positions 1186, 1190, 1214, and 1217 each coordinate Zn(2+). An Integrase catalytic domain is found at 1228–1378 (VDASPGVWQM…TPAERLINMI (151 aa)). Residues D1238 and D1290 each contribute to the Mg(2+) site. Residues 1397 to 1444 (FRVYYREGRDPVWKGPGQLIWKGEGAVVIKGGVELKEYPRRKAKIIKD) constitute a DNA-binding region (integrase-type).

As to quaternary structure, homotrimer. Interacts with gp41 (via C-terminus). In terms of assembly, homodimer. The active site consists of two apposed aspartic acid residues. Heterodimer of p66 RT and p51 RT (RT p66/p51). Heterodimerization of RT is essential for DNA polymerase activity. Despite the sequence identities, p66 RT and p51 RT have distinct folding. As to quaternary structure, homotetramer; may further associate as a homohexadecamer. Mg(2+) is required as a cofactor. Specific enzymatic cleavages by the viral protease yield mature proteins. The protease is released by autocatalytic cleavage. The polyprotein is cleaved during and after budding, this process is termed maturation. Proteolytic cleavage of p66 RT removes the RNase H domain to yield the p51 RT subunit. Post-translationally, capsid protein p24 is phosphorylated.

It is found in the virion. It localises to the host nucleus. The protein resides in the host cytoplasm. Its subcellular location is the host cell membrane. It carries out the reaction Specific for a P1 residue that is hydrophobic, and P1' variable, but often Pro.. The enzyme catalyses Endohydrolysis of RNA in RNA/DNA hybrids. Three different cleavage modes: 1. sequence-specific internal cleavage of RNA. Human immunodeficiency virus type 1 and Moloney murine leukemia virus enzymes prefer to cleave the RNA strand one nucleotide away from the RNA-DNA junction. 2. RNA 5'-end directed cleavage 13-19 nucleotides from the RNA end. 3. DNA 3'-end directed cleavage 15-20 nucleotides away from the primer terminus.. The catalysed reaction is 3'-end directed exonucleolytic cleavage of viral RNA-DNA hybrid.. It catalyses the reaction DNA(n) + a 2'-deoxyribonucleoside 5'-triphosphate = DNA(n+1) + diphosphate. With respect to regulation, the viral protease is inhibited by many synthetic protease inhibitors (PIs), such as amprenavir, atazanavir, indinavir, loprinavir, nelfinavir, ritonavir and saquinavir. RT can be inhibited either by nucleoside RT inhibitors (NRTIs) or by non nucleoside RT inhibitors (NNRTIs). NRTIs act as chain terminators, whereas NNRTIs inhibit DNA polymerization by binding a small hydrophobic pocket near the RT active site and inducing an allosteric change in this region. Classical NRTIs are abacavir, adefovir (PMEA), didanosine (ddI), lamivudine (3TC), stavudine (d4T), tenofovir (PMPA), zalcitabine (ddC), and zidovudine (AZT). Classical NNRTIs are atevirdine (BHAP U-87201E), delavirdine, efavirenz (DMP-266), emivirine (I-EBU), and nevirapine (BI-RG-587). The tritherapies used as a basic effective treatment of AIDS associate two NRTIs and one NNRTI. Use of protease inhibitors in tritherapy regimens permit more ambitious therapeutic strategies. Gag-Pol polyprotein and Gag polyprotein may regulate their own translation, by the binding genomic RNA in the 5'-UTR. At low concentration, Gag-Pol and Gag would promote translation, whereas at high concentration, the polyproteins encapsidate genomic RNA and then shut off translation. In terms of biological role, matrix protein p17 has two main functions: in infected cell, it targets Gag and Gag-pol polyproteins to the plasma membrane via a multipartite membrane-binding signal, that includes its myristointegration complex. The myristoylation signal and the NLS exert conflicting influences its subcellular localization. The key regulation of these motifs might be phosphorylation of a portion of MA molecules on the C-terminal tyrosine at the time of virus maturation, by virion-associated cellular tyrosine kinase. Implicated in the release from host cell mediated by Vpu. Its function is as follows. Capsid protein p24 forms the conical core that encapsulates the genomic RNA-nucleocapsid complex in the virion. The core is constituted by capsid protein hexamer subunits. The core is disassembled soon after virion entry. Interaction with host PPIA/CYPA protects the virus from restriction by host TRIM5-alpha and from an unknown antiviral activity in host cells. This capsid restriction by TRIM5 is one of the factors which restricts SIV to the simian species. Functionally, nucleocapsid protein p7 encapsulates and protects viral dimeric unspliced (genomic) RNA. Binds these RNAs through its zinc fingers. Facilitates rearangement of nucleic acid secondary structure during retrotranscription of genomic RNA. This capability is referred to as nucleic acid chaperone activity. The aspartyl protease mediates proteolytic cleavages of Gag and Gag-Pol polyproteins during or shortly after the release of the virion from the plasma membrane. Cleavages take place as an ordered, step-wise cascade to yield mature proteins. This process is called maturation. Displays maximal activity during the budding process just prior to particle release from the cell. Also cleaves Nef and Vif, probably concomitantly with viral structural proteins on maturation of virus particles. Hydrolyzes host EIF4GI and PABP1 in order to shut off the capped cellular mRNA translation. The resulting inhibition of cellular protein synthesis serves to ensure maximal viral gene expression and to evade host immune response. In terms of biological role, reverse transcriptase/ribonuclease H (RT) is a multifunctional enzyme that converts the viral dimeric RNA genome into dsDNA in the cytoplasm, shortly after virus entry into the cell. This enzyme displays a DNA polymerase activity that can copy either DNA or RNA templates, and a ribonuclease H (RNase H) activity that cleaves the RNA strand of RNA-DNA heteroduplexes in a partially processive 3' to 5' endonucleasic mode. Conversion of viral genomic RNA into dsDNA requires many steps. A tRNA binds to the primer-binding site (PBS) situated at the 5'-end of the viral RNA. RT uses the 3' end of the tRNA primer to perform a short round of RNA-dependent minus-strand DNA synthesis. The reading proceeds through the U5 region and ends after the repeated (R) region which is present at both ends of viral RNA. The portion of the RNA-DNA heteroduplex is digested by the RNase H, resulting in a ssDNA product attached to the tRNA primer. This ssDNA/tRNA hybridizes with the identical R region situated at the 3' end of viral RNA. This template exchange, known as minus-strand DNA strong stop transfer, can be either intra- or intermolecular. RT uses the 3' end of this newly synthesized short ssDNA to perform the RNA-dependent minus-strand DNA synthesis of the whole template. RNase H digests the RNA template except for two polypurine tracts (PPTs) situated at the 5'-end and near the center of the genome. It is not clear if both polymerase and RNase H activities are simultaneous. RNase H can probably proceed both in a polymerase-dependent (RNA cut into small fragments by the same RT performing DNA synthesis) and a polymerase-independent mode (cleavage of remaining RNA fragments by free RTs). Secondly, RT performs DNA-directed plus-strand DNA synthesis using the PPTs that have not been removed by RNase H as primers. PPTs and tRNA primers are then removed by RNase H. The 3' and 5' ssDNA PBS regions hybridize to form a circular dsDNA intermediate. Strand displacement synthesis by RT to the PBS and PPT ends produces a blunt ended, linear dsDNA copy of the viral genome that includes long terminal repeats (LTRs) at both ends. Its function is as follows. Integrase catalyzes viral DNA integration into the host chromosome, by performing a series of DNA cutting and joining reactions. This enzyme activity takes place after virion entry into a cell and reverse transcription of the RNA genome in dsDNA. The first step in the integration process is 3' processing. This step requires a complex comprising the viral genome, matrix protein, Vpr and integrase. This complex is called the pre-integration complex (PIC). The integrase protein removes 2 nucleotides from each 3' end of the viral DNA, leaving recessed CA OH's at the 3' ends. In the second step, the PIC enters cell nucleus. This process is mediated through integrase and Vpr proteins, and allows the virus to infect a non dividing cell. This ability to enter the nucleus is specific of lentiviruses, other retroviruses cannot and rely on cell division to access cell chromosomes. In the third step, termed strand transfer, the integrase protein joins the previously processed 3' ends to the 5' ends of strands of target cellular DNA at the site of integration. The 5'-ends are produced by integrase-catalyzed staggered cuts, 5 bp apart. A Y-shaped, gapped, recombination intermediate results, with the 5'-ends of the viral DNA strands and the 3' ends of target DNA strands remaining unjoined, flanking a gap of 5 bp. The last step is viral DNA integration into host chromosome. This involves host DNA repair synthesis in which the 5 bp gaps between the unjoined strands are filled in and then ligated. Since this process occurs at both cuts flanking the SIV genome, a 5 bp duplication of host DNA is produced at the ends of SIV integration. Alternatively, Integrase may catalyze the excision of viral DNA just after strand transfer, this is termed disintegration. In Cercopithecidae (Old World monkeys), this protein is Gag-Pol polyprotein (gag-pol).